A 128-amino-acid polypeptide reads, in one-letter code: Small ribosomal subunit protein uS11 (128 aa).

This sequence belongs to the universal ribosomal protein uS11 family. As to quaternary structure, part of the 30S ribosomal subunit. Interacts with proteins S7 and S18. Binds to IF-3.

Its function is as follows. Located on the platform of the 30S subunit, it bridges several disparate RNA helices of the 16S rRNA. Forms part of the Shine-Dalgarno cleft in the 70S ribosome. The protein is Small ribosomal subunit protein uS11 of Acinetobacter baylyi (strain ATCC 33305 / BD413 / ADP1).